The primary structure comprises 149 residues: Extracellular protease inhibitor 1 (149 aa).

The N-terminal stretch at 1–16 (MKSALLFTLVVAAVHA) is a signal peptide. Kazal-like domains follow at residues 29–86 (ESNE…SSTG) and 88–141 (QPPS…ACVG). 2 disulfides stabilise this stretch: Cys-35/Cys-65 and Cys-39/Cys-58. The N-linked (GlcNAc...) asparagine glycan is linked to Asn-67. 3 disulfides stabilise this stretch: Cys-94–Cys-124, Cys-98–Cys-117, and Cys-106–Cys-139.

Interacts with host subtilisin-like protease P69B.

It is found in the secreted. Its function is as follows. Secreted effector that interacts with and inhibits the pathogenesis-related P69B subtilisin-like serine protease of host tomato. Inhibition of host proteases by a pathogen extracellular protease inhibitor forms a specific type of defense-counterdefense mechanism between plants and microbial pathogens. The protein is Extracellular protease inhibitor 1 of Phytophthora infestans (Potato late blight agent).